The sequence spans 229 residues: Cytochrome c oxidase subunit 2 (229 aa).

Over 1–26 (MATWMNINLQDANSSTMEQLTMFHDH) the chain is Mitochondrial intermembrane. Residues 27-48 (TLMILTMITSIVTFIMVSMTTN) form a helical membrane-spanning segment. Over 49 to 62 (TLINRYLLEGQTIE) the chain is Mitochondrial matrix. The chain crosses the membrane as a helical span at residues 63-82 (FIWTTIPAITLIFIALPSLH). The Mitochondrial intermembrane portion of the chain corresponds to 83–229 (LLYLIDEINN…LKWINKSLSS (147 aa)). Positions 161, 196, 198, 200, 204, and 207 each coordinate Cu cation. Glu198 is a binding site for Mg(2+).

The protein belongs to the cytochrome c oxidase subunit 2 family. As to quaternary structure, component of the cytochrome c oxidase (complex IV, CIV), a multisubunit enzyme composed of a catalytic core of 3 subunits and several supernumerary subunits. The complex exists as a monomer or a dimer and forms supercomplexes (SCs) in the inner mitochondrial membrane with ubiquinol-cytochrome c oxidoreductase (cytochrome b-c1 complex, complex III, CIII). Requires Cu cation as cofactor.

Its subcellular location is the mitochondrion inner membrane. The catalysed reaction is 4 Fe(II)-[cytochrome c] + O2 + 8 H(+)(in) = 4 Fe(III)-[cytochrome c] + 2 H2O + 4 H(+)(out). Its function is as follows. Component of the cytochrome c oxidase, the last enzyme in the mitochondrial electron transport chain which drives oxidative phosphorylation. The respiratory chain contains 3 multisubunit complexes succinate dehydrogenase (complex II, CII), ubiquinol-cytochrome c oxidoreductase (cytochrome b-c1 complex, complex III, CIII) and cytochrome c oxidase (complex IV, CIV), that cooperate to transfer electrons derived from NADH and succinate to molecular oxygen, creating an electrochemical gradient over the inner membrane that drives transmembrane transport and the ATP synthase. Cytochrome c oxidase is the component of the respiratory chain that catalyzes the reduction of oxygen to water. Electrons originating from reduced cytochrome c in the intermembrane space (IMS) are transferred via the dinuclear copper A center (CU(A)) of subunit 2 and heme A of subunit 1 to the active site in subunit 1, a binuclear center (BNC) formed by heme A3 and copper B (CU(B)). The BNC reduces molecular oxygen to 2 water molecules using 4 electrons from cytochrome c in the IMS and 4 protons from the mitochondrial matrix. The sequence is that of Cytochrome c oxidase subunit 2 (COII) from Oncopeltus fasciatus (Large milkweed bug).